A 940-amino-acid polypeptide reads, in one-letter code: Inter-alpha-trypsin inhibitor heavy chain H5 (940 aa).

The first 16 residues, 1–16 (MLLLLGLCLGLSQCVG), serve as a signal peptide directing secretion. The VIT domain maps to 35–161 (VPRQVRLLQR…KAAFFLSYEE (127 aa)). N-linked (GlcNAc...) asparagine glycosylation is found at Asn-97 and Asn-127. Disordered stretches follow at residues 117-136 (KSGD…NGEK) and 208-227 (SRQR…PSTV). Asn-231 is a glycosylation site (N-linked (GlcNAc...) asparagine). Positions 295 to 478 (NVVFVLDSSA…SQLIGFYDEI (184 aa)) constitute a VWFA domain. A disordered region spans residues 405 to 432 (DGWEAHGRGDAHPQDPQQHPRGRPRPSL). A compositionally biased stretch (basic and acidic residues) spans 407-417 (WEAHGRGDAHP). Asn-508 carries N-linked (GlcNAc...) asparagine glycosylation. Residues 541 to 571 (PKTDVPVGPQKAGKDVTGSPRPGGDGERNPN) form a disordered region. N-linked (GlcNAc...) asparagine glycans are attached at residues Asn-774, Asn-793, and Asn-860.

The protein belongs to the ITIH family.

The protein resides in the secreted. Functionally, may act as a tumor suppressor. The protein is Inter-alpha-trypsin inhibitor heavy chain H5 (ITIH5) of Pongo abelii (Sumatran orangutan).